Here is a 170-residue protein sequence, read N- to C-terminus: MDEMIRRAIDESIAEVAVATGSDIYLVEADVRGGGRIIELTIEADKGVSIDQCAKLSRTIRARLEACEENLMLAAGDFELMVSSPGIGEPIRVSRQYLRHLGRKMKVVYLDSEGERKEIEGKLTEASLEGEEPSITIEPVVKGKKKKTSGREPLTLRLADVVKAVVQTEW.

The protein belongs to the RimP family.

Its subcellular location is the cytoplasm. Functionally, required for maturation of 30S ribosomal subunits. The chain is Ribosome maturation factor RimP from Chlorobaculum parvum (strain DSM 263 / NCIMB 8327) (Chlorobium vibrioforme subsp. thiosulfatophilum).